The sequence spans 448 residues: Phosphoglucosamine mutase (448 aa).

Residue Ser-104 is the Phosphoserine intermediate of the active site. Mg(2+)-binding residues include Ser-104, Asp-243, Asp-245, and Asp-247. Ser-104 carries the phosphoserine modification.

It belongs to the phosphohexose mutase family. The cofactor is Mg(2+). Activated by phosphorylation.

It carries out the reaction alpha-D-glucosamine 1-phosphate = D-glucosamine 6-phosphate. In terms of biological role, catalyzes the conversion of glucosamine-6-phosphate to glucosamine-1-phosphate. The polypeptide is Phosphoglucosamine mutase (Xylella fastidiosa (strain 9a5c)).